We begin with the raw amino-acid sequence, 148 residues long: Ubiquitin-conjugating enzyme E2-17 kDa (148 aa).

The region spanning 1-147 (MASKRILKEL…ARSWTQKYAM (147 aa)) is the UBC core domain. The active-site Glycyl thioester intermediate is Cys85.

Belongs to the ubiquitin-conjugating enzyme family.

The enzyme catalyses S-ubiquitinyl-[E1 ubiquitin-activating enzyme]-L-cysteine + [E2 ubiquitin-conjugating enzyme]-L-cysteine = [E1 ubiquitin-activating enzyme]-L-cysteine + S-ubiquitinyl-[E2 ubiquitin-conjugating enzyme]-L-cysteine.. It functions in the pathway protein modification; protein ubiquitination. Its function is as follows. Catalyzes the covalent attachment of ubiquitin to other proteins. Mediates the selective degradation of short-lived and abnormal proteins. This Solanum lycopersicum (Tomato) protein is Ubiquitin-conjugating enzyme E2-17 kDa.